Consider the following 255-residue polypeptide: Thiazole synthase (255 aa).

The Schiff-base intermediate with DXP role is filled by Lys-95. 1-deoxy-D-xylulose 5-phosphate contacts are provided by residues Gly-156, 182–183 (AG), and 204–205 (NT).

The protein belongs to the ThiG family. Homotetramer. Forms heterodimers with either ThiH or ThiS.

The protein resides in the cytoplasm. It carries out the reaction [ThiS sulfur-carrier protein]-C-terminal-Gly-aminoethanethioate + 2-iminoacetate + 1-deoxy-D-xylulose 5-phosphate = [ThiS sulfur-carrier protein]-C-terminal Gly-Gly + 2-[(2R,5Z)-2-carboxy-4-methylthiazol-5(2H)-ylidene]ethyl phosphate + 2 H2O + H(+). Its pathway is cofactor biosynthesis; thiamine diphosphate biosynthesis. Catalyzes the rearrangement of 1-deoxy-D-xylulose 5-phosphate (DXP) to produce the thiazole phosphate moiety of thiamine. Sulfur is provided by the thiocarboxylate moiety of the carrier protein ThiS. In vitro, sulfur can be provided by H(2)S. In Vibrio parahaemolyticus serotype O3:K6 (strain RIMD 2210633), this protein is Thiazole synthase.